The chain runs to 204 residues: Somatotropin (204 aa).

The first 17 residues, 1 to 17 (MNSVVLQLSVVCLGVSS), serve as a signal peptide directing secretion. Glutamine 18 is modified (pyrrolidone carboxylic acid). Residue histidine 36 coordinates Zn(2+). Cysteine 69 and cysteine 177 are oxidised to a cystine. Residue glutamate 186 participates in Zn(2+) binding. Residues cysteine 194 and cysteine 202 are joined by a disulfide bond.

It belongs to the somatotropin/prolactin family.

The protein resides in the secreted. In terms of biological role, growth hormone plays an important role in growth control and involved in the regulation of several anabolic processes. The protein is Somatotropin (gh) of Oreochromis mossambicus (Mozambique tilapia).